The chain runs to 137 residues: Ribonuclease VapC51 (137 aa).

The 116-residue stretch at 5-120 folds into the PINc domain; the sequence is YLLDTSVIKR…HYDADFDLIA (116 aa). Mg(2+) is bound by residues Asp8 and Asp95.

Belongs to the PINc/VapC protein family. Requires Mg(2+) as cofactor.

Functionally, toxic component of a type II toxin-antitoxin (TA) system. An RNase. Its cognate antitoxin is VapB51. In Mycobacterium tuberculosis (strain ATCC 25618 / H37Rv), this protein is Ribonuclease VapC51.